The following is a 430-amino-acid chain: Trigger factor (430 aa).

In terms of domain architecture, PPIase FKBP-type spans 163 to 248 (GNIAIIDFKG…IKDIKVKELP (86 aa)).

The protein belongs to the FKBP-type PPIase family. Tig subfamily.

It localises to the cytoplasm. It carries out the reaction [protein]-peptidylproline (omega=180) = [protein]-peptidylproline (omega=0). Functionally, involved in protein export. Acts as a chaperone by maintaining the newly synthesized protein in an open conformation. Functions as a peptidyl-prolyl cis-trans isomerase. This is Trigger factor from Clostridium botulinum (strain Loch Maree / Type A3).